Reading from the N-terminus, the 83-residue chain is Small ribosomal subunit protein eS21 (83 aa).

N-acetylmethionine is present on methionine 1. Lysine 41 participates in a covalent cross-link: Glycyl lysine isopeptide (Lys-Gly) (interchain with G-Cter in SUMO2).

This sequence belongs to the eukaryotic ribosomal protein eS21 family. Component of the 40S small ribosomal subunit.

The protein localises to the cytoplasm. Its subcellular location is the cytosol. It is found in the rough endoplasmic reticulum. In terms of biological role, component of the small ribosomal subunit. The ribosome is a large ribonucleoprotein complex responsible for the synthesis of proteins in the cell. This Oryctolagus cuniculus (Rabbit) protein is Small ribosomal subunit protein eS21 (RPS21).